Here is a 557-residue protein sequence, read N- to C-terminus: 2-succinyl-5-enolpyruvyl-6-hydroxy-3-cyclohexene-1-carboxylate synthase (557 aa).

It belongs to the TPP enzyme family. MenD subfamily. Homodimer. It depends on Mg(2+) as a cofactor. Mn(2+) serves as cofactor. Requires thiamine diphosphate as cofactor.

The catalysed reaction is isochorismate + 2-oxoglutarate + H(+) = 5-enolpyruvoyl-6-hydroxy-2-succinyl-cyclohex-3-ene-1-carboxylate + CO2. The protein operates within quinol/quinone metabolism; 1,4-dihydroxy-2-naphthoate biosynthesis; 1,4-dihydroxy-2-naphthoate from chorismate: step 2/7. It functions in the pathway quinol/quinone metabolism; menaquinone biosynthesis. Its function is as follows. Catalyzes the thiamine diphosphate-dependent decarboxylation of 2-oxoglutarate and the subsequent addition of the resulting succinic semialdehyde-thiamine pyrophosphate anion to isochorismate to yield 2-succinyl-5-enolpyruvyl-6-hydroxy-3-cyclohexene-1-carboxylate (SEPHCHC). This is 2-succinyl-5-enolpyruvyl-6-hydroxy-3-cyclohexene-1-carboxylate synthase from Staphylococcus aureus (strain MSSA476).